Consider the following 427-residue polypeptide: Trigger factor (427 aa).

The PPIase FKBP-type domain maps to 163-248; it reads GDTVVIDFVG…IHEVKAKEVP (86 aa).

This sequence belongs to the FKBP-type PPIase family. Tig subfamily.

It localises to the cytoplasm. It carries out the reaction [protein]-peptidylproline (omega=180) = [protein]-peptidylproline (omega=0). Involved in protein export. Acts as a chaperone by maintaining the newly synthesized protein in an open conformation. Functions as a peptidyl-prolyl cis-trans isomerase. The protein is Trigger factor of Streptococcus suis (strain 98HAH33).